The chain runs to 527 residues: Protein PyrBI (527 aa).

The tract at residues Met-1 to Phe-342 is aspartate carbamoyltransferase. Residues Asp-343–Ile-357 are linker. The tract at residues Val-368 to Ile-527 is aspartate carbamoyltransferase regulatory region. Zn(2+) contacts are provided by Cys-483, Cys-488, Cys-512, and Cys-515.

In the N-terminal section; belongs to the aspartate/ornithine carbamoyltransferase superfamily. ATCase family. It in the C-terminal section; belongs to the PyrI family.

The enzyme catalyses carbamoyl phosphate + L-aspartate = N-carbamoyl-L-aspartate + phosphate + H(+). Its pathway is pyrimidine metabolism; UMP biosynthesis via de novo pathway; (S)-dihydroorotate from bicarbonate: step 2/3. This is Protein PyrBI (pyrBI) from Thermotoga maritima (strain ATCC 43589 / DSM 3109 / JCM 10099 / NBRC 100826 / MSB8).